The chain runs to 336 residues: Putative ALA-interacting subunit 4 (336 aa).

The chain crosses the membrane as a helical span at residues 36-56 (VILTFLVSGVVFIPLGVICLF). Residue Asn94 is glycosylated (N-linked (GlcNAc...) asparagine). Basic and acidic residues predominate over residues 127-142 (RQDGQLRSPKDEHETK). A disordered region spans residues 127-148 (RQDGQLRSPKDEHETKSCAPED). Asn167 carries an N-linked (GlcNAc...) asparagine glycan. The helical transmembrane segment at 290 to 310 (FLGIAYLTVGSICLFLAVSFS) threads the bilayer. Residue Asn329 is glycosylated (N-linked (GlcNAc...) asparagine).

The protein belongs to the CDC50/LEM3 family. In terms of tissue distribution, expressed in flowers. May be restricted to pollen grains.

It localises to the membrane. The sequence is that of Putative ALA-interacting subunit 4 (ALIS4) from Arabidopsis thaliana (Mouse-ear cress).